A 180-amino-acid chain; its full sequence is Large ribosomal subunit protein uL6 (180 aa).

The protein belongs to the universal ribosomal protein uL6 family. Part of the 50S ribosomal subunit.

Its function is as follows. This protein binds to the 23S rRNA, and is important in its secondary structure. It is located near the subunit interface in the base of the L7/L12 stalk, and near the tRNA binding site of the peptidyltransferase center. The protein is Large ribosomal subunit protein uL6 of Picosynechococcus sp. (strain ATCC 27264 / PCC 7002 / PR-6) (Agmenellum quadruplicatum).